The chain runs to 496 residues: RNA-binding motif protein, Y chromosome, family 1 member A1 (496 aa).

Residues 8–85 (GKLFIGGLNR…KAIKVEQAKK (78 aa)) form the RRM domain. Disordered regions lie at residues 78–349 (IKVE…HRDY) and 452–496 (KDQR…SSRY). Composition is skewed to low complexity over residues 97–114 (PASS…SARG) and 149–159 (PVKRGPSSRSG). The span at 175 to 184 (NSWMGSQGPM) shows a compositional bias: polar residues. 6 stretches are compositionally biased toward basic and acidic residues: residues 204-214 (RNDRMSTRHDG), 242-253 (DNGHSNRDEHSS), 276-289 (AYRD…DESY), 313-326 (GYRD…HESY), 335-349 (SSRE…HRDY), and 484-496 (GESR…SSRY).

In terms of assembly, interacts with splicing factor proteins SFRS3/SRP20, TRA2B/SFRS10, KHDRBS1/SAM68 and KHDRBS3. In terms of tissue distribution, testis-specific.

It localises to the nucleus. In terms of biological role, RNA-binding protein involved in pre-mRNA splicing. Required for sperm development. Acts additively with TRA2B to promote exon 7 inclusion of the survival motor neuron SMN. Binds non-specifically to mRNAs. This is RNA-binding motif protein, Y chromosome, family 1 member A1 (RBMY1A1) from Homo sapiens (Human).